The primary structure comprises 352 residues: Selenide, water dikinase (352 aa).

Cysteine 23 is an active-site residue. Residues lysine 26 and 54-56 (SRD) each bind ATP. Residue aspartate 57 participates in Mg(2+) binding. ATP-binding positions include aspartate 74, aspartate 97, and 145 to 147 (GHS). Aspartate 97 is a Mg(2+) binding site. Position 233 (aspartate 233) interacts with Mg(2+).

This sequence belongs to the selenophosphate synthase 1 family. Class I subfamily. As to quaternary structure, homodimer. Requires Mg(2+) as cofactor.

It catalyses the reaction hydrogenselenide + ATP + H2O = selenophosphate + AMP + phosphate + 2 H(+). Synthesizes selenophosphate from selenide and ATP. This is Selenide, water dikinase from Shewanella baltica (strain OS185).